Consider the following 177-residue polypeptide: Adenine phosphoribosyltransferase (177 aa).

It belongs to the purine/pyrimidine phosphoribosyltransferase family. Homodimer.

It is found in the cytoplasm. The catalysed reaction is AMP + diphosphate = 5-phospho-alpha-D-ribose 1-diphosphate + adenine. Its pathway is purine metabolism; AMP biosynthesis via salvage pathway; AMP from adenine: step 1/1. Its function is as follows. Catalyzes a salvage reaction resulting in the formation of AMP, that is energically less costly than de novo synthesis. The sequence is that of Adenine phosphoribosyltransferase from Leuconostoc citreum (strain KM20).